A 626-amino-acid polypeptide reads, in one-letter code: Putative L-type lectin-domain containing receptor kinase V.8 (626 aa).

Positions 1–21 are cleaved as a signal peptide; it reads MPSELKVLHIVLVLLYTLSSS. Residues 22-212 form a legume-lectin like region; it reads TYNSNGNWTL…SIGAFHYMLS (191 aa). Residues 22–245 lie on the Extracellular side of the membrane; sequence TYNSNGNWTL…PKKSSDRTKK (224 aa). Asn28, Asn59, Asn112, and Asn162 each carry an N-linked (GlcNAc...) asparagine glycan. Residues 246–266 form a helical membrane-spanning segment; the sequence is ILAVCLTLAVFAVFVASGICF. At 267–626 the chain is on the cytoplasmic side; sequence VFYTRHKKVK…LTNSFLSHGR (360 aa). The Protein kinase domain occupies 303–562; that stretch reads FKEKQLLGKG…GLLCAHHTEL (260 aa). ATP contacts are provided by residues 309-317 and Lys332; that span reads LGKGGFGQV. The active-site Proton acceptor is Asp429.

It in the C-terminal section; belongs to the protein kinase superfamily. Ser/Thr protein kinase family. The protein in the N-terminal section; belongs to the leguminous lectin family.

The protein localises to the cell membrane. It catalyses the reaction L-seryl-[protein] + ATP = O-phospho-L-seryl-[protein] + ADP + H(+). The enzyme catalyses L-threonyl-[protein] + ATP = O-phospho-L-threonyl-[protein] + ADP + H(+). The chain is Putative L-type lectin-domain containing receptor kinase V.8 (LECRK58) from Arabidopsis thaliana (Mouse-ear cress).